Here is a 260-residue protein sequence, read N- to C-terminus: CD40 ligand (260 aa).

Residues 1-22 (MIETYSQTAPRSVAPGPPVSMK) are Cytoplasmic-facing. A helical; Signal-anchor for type II membrane protein membrane pass occupies residues 23 to 46 (IFMYLLTVFLITQMIGSALFAVYL). Residues 47–260 (HRRLDKIEDE…GFTSFGLLKL (214 aa)) lie on the Extracellular side of the membrane. Residues 121-260 (VAAHVISEAS…GFTSFGLLKL (140 aa)) form the THD domain. Cys-177 and Cys-217 are joined by a disulfide. The N-linked (GlcNAc...) asparagine glycan is linked to Asn-239.

The protein belongs to the tumor necrosis factor family. As to quaternary structure, homotrimer. Interacts with CD28. CD40 ligand, soluble form: Exists as either a monomer or a homotrimer. Forms a ternary complex between CD40 and integrins for CD40-CD40LG signaling. Post-translationally, the soluble form derives from the membrane form by proteolytic processing.

The protein resides in the cell membrane. Its subcellular location is the cell surface. It localises to the secreted. Cytokine that acts as a ligand to CD40/TNFRSF5. Costimulates T-cell proliferation and cytokine production. Its cross-linking on T-cells generates a costimulatory signal which enhances the production of IL4 and IL10 in conjunction with the TCR/CD3 ligation and CD28 costimulation. Induces the activation of NF-kappa-B. Induces the activation of kinases MAPK8 and PAK2 in T-cells. Mediates B-cell proliferation in the absence of co-stimulus as well as IgE production in the presence of IL4. Involved in immunoglobulin class switching. In terms of biological role, acts as a ligand for integrins, specifically ITGA5:ITGB1 and ITGAV:ITGB3; both integrins and the CD40 receptor are required for activation of CD40-CD40LG signaling, which have cell-type dependent effects, such as B-cell activation, NF-kappa-B signaling and anti-apoptotic signaling. The sequence is that of CD40 ligand (CD40LG) from Felis catus (Cat).